Consider the following 511-residue polypeptide: Maturase K (511 aa).

It belongs to the intron maturase 2 family. MatK subfamily.

Its subcellular location is the plastid. It is found in the chloroplast. Functionally, usually encoded in the trnK tRNA gene intron. Probably assists in splicing its own and other chloroplast group II introns. The protein is Maturase K of Maihuenia poeppigii (Hardy cactus).